The chain runs to 533 residues: Zona pellucida sperm-binding protein 3 receptor (533 aa).

The N-terminal stretch at 1 to 28 (MFPRLQAVSAPALLQITLMAVLLAPVLG) is a signal peptide. Sushi domains are found at residues 29–88 (DCGP…FCAK), 89–150 (KRCR…ECVI), 151–215 (VKCD…TCEK), 216–275 (VICR…TCEP), 276–342 (NGCI…GCER), 343–408 (VCCP…ACES), and 409–467 (AVCL…KCEW). Disulfide bonds link cysteine 30/cysteine 74, cysteine 60/cysteine 86, cysteine 91/cysteine 132, cysteine 118/cysteine 148, cysteine 153/cysteine 196, cysteine 182/cysteine 213, cysteine 218/cysteine 260, cysteine 246/cysteine 273, cysteine 278/cysteine 328, cysteine 312/cysteine 340, cysteine 345/cysteine 393, cysteine 378/cysteine 406, cysteine 411/cysteine 452, and cysteine 438/cysteine 465. Asparagine 68 and asparagine 77 each carry an N-linked (GlcNAc...) asparagine glycan. 3 N-linked (GlcNAc...) asparagine glycosylation sites follow: asparagine 185, asparagine 191, and asparagine 200. Asparagine 433 and asparagine 455 each carry an N-linked (GlcNAc...) asparagine glycan.

Homooligomer; disulfide-linked. May contain 6-8 monomers per oligomer. Post-translationally, the N-terminus may be blocked. In terms of tissue distribution, testis. Not expressed in heart, brain, liver or kidney.

It localises to the cytoplasmic vesicle. The protein resides in the secretory vesicle. The protein localises to the acrosome lumen. Functionally, probably involved in the formation of the dense core and M1 domain of the acrosome. May also regulate the release of certain secretory proteins following the acrosomal reaction. This is Zona pellucida sperm-binding protein 3 receptor (ZP3R) from Cavia porcellus (Guinea pig).